The chain runs to 194 residues: Phosphoheptose isomerase (194 aa).

Residues 31-186 enclose the SIS domain; the sequence is ICQRFQAGNK…CEQVESRLFA (156 aa). A substrate-binding site is contributed by 46–48; it reads NGG. Positions 55 and 59 each coordinate Zn(2+). Substrate contacts are provided by residues Glu59, 88 to 89, 114 to 116, Ser119, and Gln166; these read ND and STS. Residues Gln166 and His174 each contribute to the Zn(2+) site.

It belongs to the SIS family. GmhA subfamily. It depends on Zn(2+) as a cofactor.

It localises to the cytoplasm. It catalyses the reaction 2 D-sedoheptulose 7-phosphate = D-glycero-alpha-D-manno-heptose 7-phosphate + D-glycero-beta-D-manno-heptose 7-phosphate. It participates in carbohydrate biosynthesis; D-glycero-D-manno-heptose 7-phosphate biosynthesis; D-glycero-alpha-D-manno-heptose 7-phosphate and D-glycero-beta-D-manno-heptose 7-phosphate from sedoheptulose 7-phosphate: step 1/1. Catalyzes the isomerization of sedoheptulose 7-phosphate in D-glycero-D-manno-heptose 7-phosphate. The chain is Phosphoheptose isomerase from Synechocystis sp. (strain ATCC 27184 / PCC 6803 / Kazusa).